The primary structure comprises 122 residues: uncharacterized protein (122 aa).

Helical transmembrane passes span 9–29 (VATV…STWV) and 60–80 (LFSF…CLIM).

The protein resides in the cytoplasm. It localises to the membrane. This is an uncharacterized protein from Schizosaccharomyces pombe (strain 972 / ATCC 24843) (Fission yeast).